The following is a 343-amino-acid chain: Mesaconyl-CoA hydratase (343 aa).

Residues 47-116 (SDEFARACGL…STVIGLKENS (70 aa)) form the MaoC-like domain. Residues 60 to 63 (PVDE), 83 to 86 (VANL), and 94 to 96 (LKP) each bind substrate.

It carries out the reaction (2R,3S)-beta-methylmalyl-CoA = 2-methylfumaryl-CoA + H2O. Involved in the ethylmalonyl-CoA pathway for acetate assimilation. Catalyzes the reversible hydration of mesaconyl-CoA (2-methylfumaryl-CoA) to yield beta-methylmalyl-CoA ((2R,3S)-beta-methylmalyl-CoA). The protein is Mesaconyl-CoA hydratase (mch) of Cereibacter sphaeroides (strain ATCC 17023 / DSM 158 / JCM 6121 / CCUG 31486 / LMG 2827 / NBRC 12203 / NCIMB 8253 / ATH 2.4.1.) (Rhodobacter sphaeroides).